We begin with the raw amino-acid sequence, 346 residues long: Annexin A1 (346 aa).

Position 5 is a phosphoserine; by TRPM7 (serine 5). Glutamine 19 is covalently cross-linked (Isoglutamyl lysine isopeptide (Gln-Lys) (interchain with K-?)). Tyrosine 21 bears the Phosphotyrosine; by EGFR mark. At serine 27 the chain carries Phosphoserine; by PKC. Phosphoserine occurs at positions 34 and 37. Annexin repeat units follow at residues 42–113, 114–185, 197–269, and 273–344; these read FDAS…ALLK, TPAQ…SLAK, DLAD…AIVK, and STPA…ALCG. Residue lysine 58 is modified to N6-acetyllysine. Ca(2+) is bound by residues glycine 59, valine 60, glutamate 62, lysine 97, leucine 100, glutamate 105, methionine 127, glycine 129, glycine 131, threonine 132, and glutamate 134. Threonine 136 carries the post-translational modification Phosphothreonine. Ca(2+) contacts are provided by aspartate 171, glycine 210, and arginine 213. Residue lysine 214 forms a Glycyl lysine isopeptide (Lys-Gly) (interchain with G-Cter in SUMO1); alternate linkage. A Glycyl lysine isopeptide (Lys-Gly) (interchain with G-Cter in SUMO2); alternate cross-link involves residue lysine 214. Glycine 215 is a Ca(2+) binding site. Position 239 is an N6-acetyllysine (lysine 239). Positions 253, 255, and 256 each coordinate Ca(2+). Lysine 257 is covalently cross-linked (Glycyl lysine isopeptide (Lys-Gly) (interchain with G-Cter in SUMO1)). The Ca(2+) site is built by glutamate 261, methionine 286, glycine 288, and glycine 290. At lysine 312 the chain carries N6-acetyllysine. Residues cysteine 324 and cysteine 343 are joined by a disulfide bond. Residues leucine 328, glutamate 330, and threonine 331 each coordinate Ca(2+). A Glycyl lysine isopeptide (Lys-Gly) (interchain with G-Cter in SUMO1) cross-link involves residue lysine 332. Position 336 (glutamate 336) interacts with Ca(2+).

Belongs to the annexin family. Homodimer; non-covalently linked. Homodimer; linked by transglutamylation. Homodimers linked by transglutamylation are observed in placenta, but not in other tissues. Interacts with S100A11. Heterotetramer, formed by two molecules each of S100A11 and ANXA1. Interacts with DYSF. Interacts with EGFR. Post-translationally, phosphorylated by protein kinase C, EGFR and TRPM7. Phosphorylated in response to EGF treatment. Sumoylated. In terms of processing, proteolytically cleaved by cathepsin CTSG to release the active N-terminal peptide Ac2-26.

It is found in the nucleus. It localises to the cytoplasm. The protein localises to the cell projection. Its subcellular location is the cilium. The protein resides in the basolateral cell membrane. It is found in the lateral cell membrane. It localises to the cell membrane. The protein localises to the apical cell membrane. Its subcellular location is the membrane. The protein resides in the endosome membrane. It is found in the secreted. It localises to the extracellular space. The protein localises to the early endosome. Its subcellular location is the cytoplasmic vesicle membrane. The protein resides in the extracellular exosome. It is found in the cytoplasmic vesicle. It localises to the secretory vesicle lumen. The protein localises to the phagocytic cup. Plays important roles in the innate immune response as effector of glucocorticoid-mediated responses and regulator of the inflammatory process. Has anti-inflammatory activity. Plays a role in glucocorticoid-mediated down-regulation of the early phase of the inflammatory response. Contributes to the adaptive immune response by enhancing signaling cascades that are triggered by T-cell activation, regulates differentiation and proliferation of activated T-cells. Promotes the differentiation of T-cells into Th1 cells and negatively regulates differentiation into Th2 cells. Has no effect on unstimulated T-cells. Negatively regulates hormone exocytosis via activation of the formyl peptide receptors and reorganization of the actin cytoskeleton. Has high affinity for Ca(2+) and can bind up to eight Ca(2+) ions. Displays Ca(2+)-dependent binding to phospholipid membranes. Plays a role in the formation of phagocytic cups and phagosomes. Plays a role in phagocytosis by mediating the Ca(2+)-dependent interaction between phagosomes and the actin cytoskeleton. In terms of biological role, functions at least in part by activating the formyl peptide receptors and downstream signaling cascades. Promotes chemotaxis of granulocytes and monocytes via activation of the formyl peptide receptors. Promotes rearrangement of the actin cytoskeleton, cell polarization and cell migration. Promotes resolution of inflammation and wound healing. Acts via neutrophil N-formyl peptide receptors to enhance the release of CXCL2. The sequence is that of Annexin A1 (ANXA1) from Cavia cutleri (Guinea pig).